The primary structure comprises 232 residues: Large ribosomal subunit protein uL1 (232 aa).

This sequence belongs to the universal ribosomal protein uL1 family. Part of the 50S ribosomal subunit.

Functionally, binds directly to 23S rRNA. The L1 stalk is quite mobile in the ribosome, and is involved in E site tRNA release. Protein L1 is also a translational repressor protein, it controls the translation of the L11 operon by binding to its mRNA. The chain is Large ribosomal subunit protein uL1 from Bacteroides fragilis (strain ATCC 25285 / DSM 2151 / CCUG 4856 / JCM 11019 / LMG 10263 / NCTC 9343 / Onslow / VPI 2553 / EN-2).